A 147-amino-acid chain; its full sequence is Deoxyuridine 5'-triphosphate nucleotidohydrolase (147 aa).

Residues 67-69, asparagine 80, and 84-86 contribute to the substrate site; these read RSG and LID.

It belongs to the dUTPase family. It depends on Mg(2+) as a cofactor.

It catalyses the reaction dUTP + H2O = dUMP + diphosphate + H(+). The protein operates within pyrimidine metabolism; dUMP biosynthesis; dUMP from dCTP (dUTP route): step 2/2. This enzyme is involved in nucleotide metabolism: it produces dUMP, the immediate precursor of thymidine nucleotides and it decreases the intracellular concentration of dUTP so that uracil cannot be incorporated into DNA. The sequence is that of Deoxyuridine 5'-triphosphate nucleotidohydrolase from Gloeobacter violaceus (strain ATCC 29082 / PCC 7421).